We begin with the raw amino-acid sequence, 204 residues long: ATP phosphoribosyltransferase (204 aa).

This sequence belongs to the ATP phosphoribosyltransferase family. Short subfamily. As to quaternary structure, heteromultimer composed of HisG and HisZ subunits.

It is found in the cytoplasm. The catalysed reaction is 1-(5-phospho-beta-D-ribosyl)-ATP + diphosphate = 5-phospho-alpha-D-ribose 1-diphosphate + ATP. The protein operates within amino-acid biosynthesis; L-histidine biosynthesis; L-histidine from 5-phospho-alpha-D-ribose 1-diphosphate: step 1/9. In terms of biological role, catalyzes the condensation of ATP and 5-phosphoribose 1-diphosphate to form N'-(5'-phosphoribosyl)-ATP (PR-ATP). Has a crucial role in the pathway because the rate of histidine biosynthesis seems to be controlled primarily by regulation of HisG enzymatic activity. The sequence is that of ATP phosphoribosyltransferase from Leptospira biflexa serovar Patoc (strain Patoc 1 / Ames).